Consider the following 205-residue polypeptide: MKELKQAEQIRTWVQSILTDESSGHDWHHVSRVADLAAYIGEKEKADLFIVETAALVHDLIDVKLPDTVRLSVSEVYDQLVFFGVGKENADRVIHIITRMSFRDRGKLAKEPLSIEGKAVQDADRLDAIGAVGIARAFMFAGAKGHGLYGDEQSAYAHFFHKLLRLKDMMNTDTARELAEERHNFMLQFVRQLEKDIPGIDAETS.

The HD domain occupies 26–129 (DWHHVSRVAD…VQDADRLDAI (104 aa)).

This is an uncharacterized protein from Bacillus subtilis (strain 168).